Reading from the N-terminus, the 206-residue chain is Large ribosomal subunit protein uL3 (206 aa).

Residues 127–151 (SGGPSSHGSKFHRHLGGTGQATTPA) form a disordered region.

This sequence belongs to the universal ribosomal protein uL3 family. As to quaternary structure, part of the 50S ribosomal subunit. Forms a cluster with proteins L14 and L19.

Its function is as follows. One of the primary rRNA binding proteins, it binds directly near the 3'-end of the 23S rRNA, where it nucleates assembly of the 50S subunit. The chain is Large ribosomal subunit protein uL3 from Borreliella burgdorferi (strain ATCC 35210 / DSM 4680 / CIP 102532 / B31) (Borrelia burgdorferi).